The chain runs to 100 residues: Urease subunit gamma (100 aa).

Belongs to the urease gamma subunit family. As to quaternary structure, heterotrimer of UreA (gamma), UreB (beta) and UreC (alpha) subunits. Three heterotrimers associate to form the active enzyme.

The protein resides in the cytoplasm. It carries out the reaction urea + 2 H2O + H(+) = hydrogencarbonate + 2 NH4(+). It functions in the pathway nitrogen metabolism; urea degradation; CO(2) and NH(3) from urea (urease route): step 1/1. The polypeptide is Urease subunit gamma (Azoarcus sp. (strain BH72)).